The sequence spans 200 residues: RNA-binding protein with multiple splicing 2 (200 aa).

Residues 22–99 (RTLFVSGLPV…QTLRLEFAKA (78 aa)) form the RRM domain. Residues 32 to 42 (DIKPRELYLLF) form an important for homodimerization region.

As to quaternary structure, homodimer. As to expression, expressed in developing heart.

Its subcellular location is the cytoplasm. It is found in the nucleus. The protein localises to the stress granule. Functionally, RNA-binding protein involved in the regulation of smooth muscle cell differentiation and proliferation in the gastrointestinal system. Binds NOG mRNA, the major inhibitor of the bone morphogenetic protein (BMP) pathway. Mediates an increase of NOG mRNA levels, thereby contributing to the negative regulation of BMP signaling pathway and promoting reversible dedifferentiation and proliferation of smooth muscle cells. Acts as a pre-mRNA alternative splicing regulator. Mediates ACTN1 and FLNB alternative splicing. Likely binds to mRNA tandem CAC trinucleotide or CA dinucleotide motifs. The sequence is that of RNA-binding protein with multiple splicing 2 from Gallus gallus (Chicken).